An 83-amino-acid polypeptide reads, in one-letter code: MSFFRYLSDISSETRTLLLAYGVLGGLYLILVPLALYWWMNRRWYIMGKIERLFVYGLVFLFFPGLILLSPFLNMRLKGQGET.

A run of 2 helical transmembrane segments spans residues 17–37 (LLLA…LALY) and 53–73 (LFVY…SPFL).

This sequence belongs to the complex I NdhL subunit family. In terms of assembly, NDH-1 can be composed of about 15 different subunits; different subcomplexes with different compositions have been identified which probably have different functions.

The protein resides in the plastid. The protein localises to the organellar chromatophore thylakoid membrane. The enzyme catalyses a plastoquinone + NADH + (n+1) H(+)(in) = a plastoquinol + NAD(+) + n H(+)(out). It catalyses the reaction a plastoquinone + NADPH + (n+1) H(+)(in) = a plastoquinol + NADP(+) + n H(+)(out). In terms of biological role, NDH-1 shuttles electrons from an unknown electron donor, via FMN and iron-sulfur (Fe-S) centers, to quinones in the respiratory and/or the photosynthetic chain. The immediate electron acceptor for the enzyme in this species is believed to be plastoquinone. Couples the redox reaction to proton translocation, and thus conserves the redox energy in a proton gradient. The polypeptide is NAD(P)H-quinone oxidoreductase subunit L, organellar chromatophore (Paulinella chromatophora).